Here is a 236-residue protein sequence, read N- to C-terminus: Terpene cyclase andB (236 aa).

7 helical membrane-spanning segments follow: residues 13–33 (TVVN…YILM), 45–65 (MSML…ILCP), 70–90 (VVRP…YAAI), 106–126 (HLPL…IALI), 135–155 (FLWS…FQLL), 166–186 (VLWL…TLMW), and 200–220 (LTAY…VVFY).

The protein belongs to the paxB family.

It localises to the membrane. It participates in secondary metabolite biosynthesis; terpenoid biosynthesis. In terms of biological role, terpene cyclase; part of the gene cluster that mediates the biosynthesis of anditomin, a fungal meroterpenoid. The first step of the pathway is the synthesis of 3,5-dimethylorsellinic acid (DMOA) by the polyketide synthase andM. DMOA is then converted to the phthalide compound 5,7-dihydroxy-4,6-dimethylphthalide (DHDMP) by the cytochrome P450 monooxygenase andK, which is further prenylated by the prenyltransferase andD to yield farnesyl-DHDMP. Further epoxidation by the FAD-dependent monooxygenase andE leads to epoxyfarnesyl-DHDMP. The next step involves the terpene cyclase andB that converts epoxyfarnesyl-DHDMP into preandiloid A through opening of the epoxide ring followed by the cyclization of the farnesyl moiety. Preandiloid A is in turn oxidized at the C-3 hydroxyl group to yield preandiloid B by the dehydrogenase andC. The dioxygenase andA is solely responsible for the dehydrogenation of preandiloid B leading to the enone preandiloid C, as well as for the intriguing structural rearrangement to generate the bicyclo[2.2.2]octane core, transforming preandiloid C into andiconin. FAD-binding monooxygenase andJ then produces andilesin D which is reduced by dehydrogenase andI to yield andilesin A. Action of acetyltransferase andG followed by a spontaneous acetate elimination leads then to andilesin B, which is in turn substrate of the short chain dehydrogenase andH to yield andilesin C. Finally, the dioxygenase andF catalyzes the transformation of andilesin C to anditomin. The protein is Terpene cyclase andB of Emericella variicolor (Aspergillus stellatus).